The following is a 184-amino-acid chain: NADH-quinone oxidoreductase subunit B (184 aa).

[4Fe-4S] cluster-binding residues include C37, C38, C103, and C132.

Belongs to the complex I 20 kDa subunit family. NDH-1 is composed of 14 different subunits. Subunits NuoB, C, D, E, F, and G constitute the peripheral sector of the complex. [4Fe-4S] cluster is required as a cofactor.

The protein resides in the cell membrane. The catalysed reaction is a quinone + NADH + 5 H(+)(in) = a quinol + NAD(+) + 4 H(+)(out). NDH-1 shuttles electrons from NADH, via FMN and iron-sulfur (Fe-S) centers, to quinones in the respiratory chain. The immediate electron acceptor for the enzyme in this species is believed to be a menaquinone. Couples the redox reaction to proton translocation (for every two electrons transferred, four hydrogen ions are translocated across the cytoplasmic membrane), and thus conserves the redox energy in a proton gradient. This is NADH-quinone oxidoreductase subunit B from Mycobacterium bovis (strain BCG / Pasteur 1173P2).